The following is a 353-amino-acid chain: DNA integrity scanning protein DisA (353 aa).

Positions 6 to 144 (DKELMNILKI…GGIKYVLRDS (139 aa)) constitute a DAC domain. Residues Gly-73, Leu-91, and 104 to 108 (TRHRT) each bind ATP.

The protein belongs to the DisA family. Homooctamer. Requires Mg(2+) as cofactor.

The catalysed reaction is 2 ATP = 3',3'-c-di-AMP + 2 diphosphate. Participates in a DNA-damage check-point that is active prior to asymmetric division when DNA is damaged. DisA forms globular foci that rapidly scan along the chromosomes during sporulation, searching for lesions. When a lesion is present, DisA pauses at the lesion site. This triggers a cellular response that culminates in a temporary block in sporulation initiation. Functionally, also has diadenylate cyclase activity, catalyzing the condensation of 2 ATP molecules into cyclic di-AMP (c-di-AMP). c-di-AMP acts as a signaling molecule that couples DNA integrity with progression of sporulation. The rise in c-di-AMP level generated by DisA while scanning the chromosome, operates as a positive signal that advances sporulation; upon encountering a lesion, the DisA focus arrests at the damaged site and halts c-di-AMP synthesis. The protein is DNA integrity scanning protein DisA of Clostridium botulinum (strain Okra / Type B1).